A 61-amino-acid chain; its full sequence is Metallothionein-1H (61 aa).

Position 1 is an N-acetylmethionine (methionine 1). The tract at residues 1-29 is beta; that stretch reads MDPNCSCEAGGSCACAGSCKCKKCKCTSC. A divalent metal cation is bound by residues cysteine 5, cysteine 7, cysteine 13, cysteine 15, cysteine 19, cysteine 21, cysteine 24, cysteine 26, cysteine 29, cysteine 33, cysteine 34, cysteine 36, cysteine 37, cysteine 41, cysteine 44, cysteine 48, cysteine 50, and cysteine 57. Positions 30–61 are alpha; the sequence is KKSCCSCCPLGCAKCAQGCICKGASEKCSCCA. Serine 58 is subject to Phosphoserine. Cysteine 59 and cysteine 60 together coordinate a divalent metal cation.

Belongs to the metallothionein superfamily. Type 1 family. Monomer.

Its function is as follows. Metallothioneins have a high content of cysteine residues that bind various heavy metals; these proteins are transcriptionally regulated by both heavy metals and glucocorticoids. The polypeptide is Metallothionein-1H (MT1H) (Homo sapiens (Human)).